The sequence spans 192 residues: Xanthine phosphoribosyltransferase (192 aa).

Leu20 and Asn27 together coordinate xanthine. 128 to 132 is a binding site for 5-phospho-alpha-D-ribose 1-diphosphate; it reads AQGEA. Lys156 contacts xanthine.

The protein belongs to the purine/pyrimidine phosphoribosyltransferase family. Xpt subfamily. As to quaternary structure, homodimer.

Its subcellular location is the cytoplasm. It carries out the reaction XMP + diphosphate = xanthine + 5-phospho-alpha-D-ribose 1-diphosphate. It participates in purine metabolism; XMP biosynthesis via salvage pathway; XMP from xanthine: step 1/1. Functionally, converts the preformed base xanthine, a product of nucleic acid breakdown, to xanthosine 5'-monophosphate (XMP), so it can be reused for RNA or DNA synthesis. This Lactobacillus helveticus (strain DPC 4571) protein is Xanthine phosphoribosyltransferase.